Reading from the N-terminus, the 331-residue chain is Beta-hexosaminidase (331 aa).

Residues Asp-60, Arg-68, Arg-133, and 163-164 (KH) contribute to the substrate site. The active-site Proton donor/acceptor is the His-176. The active-site Nucleophile is Asp-247.

The protein belongs to the glycosyl hydrolase 3 family. NagZ subfamily.

It is found in the cytoplasm. The catalysed reaction is Hydrolysis of terminal non-reducing N-acetyl-D-hexosamine residues in N-acetyl-beta-D-hexosaminides.. It functions in the pathway cell wall biogenesis; peptidoglycan recycling. Plays a role in peptidoglycan recycling by cleaving the terminal beta-1,4-linked N-acetylglucosamine (GlcNAc) from peptide-linked peptidoglycan fragments, giving rise to free GlcNAc, anhydro-N-acetylmuramic acid and anhydro-N-acetylmuramic acid-linked peptides. In Xanthomonas campestris pv. campestris (strain B100), this protein is Beta-hexosaminidase.